The following is a 142-amino-acid chain: Hemoglobin subunit alpha-1 (142 aa).

Position 1 is an N-acetylserine (serine 1). One can recognise a Globin domain in the interval 1–142; that stretch reads SLSVKDKAAV…VALALAERYR (142 aa). Histidine 59 provides a ligand contact to O2. Heme b is bound at residue histidine 88.

Belongs to the globin family. Hb 1 is a heterotetramer of two alpha-1 and two beta-1 chains. As to expression, red blood cells.

Involved in oxygen transport from gills to the various peripheral tissues. The sequence is that of Hemoglobin subunit alpha-1 (hba1) from Gobionotothen gibberifrons (Humped rockcod).